The sequence spans 412 residues: Tyrosine--tRNA ligase (412 aa).

A 'HIGH' region motif is present at residues 56–65; that stretch reads PSAPDVHIGH. Residues 240 to 244 carry the 'KMSKS' region motif; it reads KMSKS. An ATP-binding site is contributed by lysine 243. Residues 351–412 form the S4 RNA-binding domain; the sequence is VWIVDLLVTL…GKRKFKKLVR (62 aa).

The protein belongs to the class-I aminoacyl-tRNA synthetase family. TyrS type 2 subfamily. As to quaternary structure, homodimer.

Its subcellular location is the cytoplasm. The enzyme catalyses tRNA(Tyr) + L-tyrosine + ATP = L-tyrosyl-tRNA(Tyr) + AMP + diphosphate + H(+). In terms of biological role, catalyzes the attachment of tyrosine to tRNA(Tyr) in a two-step reaction: tyrosine is first activated by ATP to form Tyr-AMP and then transferred to the acceptor end of tRNA(Tyr). The sequence is that of Tyrosine--tRNA ligase from Halalkalibacterium halodurans (strain ATCC BAA-125 / DSM 18197 / FERM 7344 / JCM 9153 / C-125) (Bacillus halodurans).